The sequence spans 302 residues: NmrA-like family domain-containing protein DDB_G0286605 (302 aa).

NADP(+) contacts are provided by residues 9–14, 35–39, 56–57, 78–80, Lys130, and 157–160; these read GGTGYQ, RNPES, DE, TNS, and YFQN.

It belongs to the NmrA-type oxidoreductase family.

May be a redox sensor protein. The sequence is that of NmrA-like family domain-containing protein DDB_G0286605 from Dictyostelium discoideum (Social amoeba).